The chain runs to 90 residues: PqqA binding protein 2 (90 aa).

It belongs to the PqqD family. In terms of assembly, monomer. Interacts with PqqE.

Its pathway is cofactor biosynthesis; pyrroloquinoline quinone biosynthesis. Functionally, functions as a PqqA binding protein and presents PqqA to PqqE, in the pyrroloquinoline quinone (PQQ) biosynthetic pathway. This is PqqA binding protein 2 (pqqD2) from Pseudomonas putida (strain ATCC 47054 / DSM 6125 / CFBP 8728 / NCIMB 11950 / KT2440).